Reading from the N-terminus, the 482-residue chain is Cobyric acid synthase (482 aa).

The GATase cobBQ-type domain occupies 249 to 436 (QCKIACLALS…LHGLFTSDDF (188 aa)). Residue C331 is the Nucleophile of the active site. Residue H428 is part of the active site.

It belongs to the CobB/CobQ family. CobQ subfamily.

Its pathway is cofactor biosynthesis; adenosylcobalamin biosynthesis. Catalyzes amidations at positions B, D, E, and G on adenosylcobyrinic A,C-diamide. NH(2) groups are provided by glutamine, and one molecule of ATP is hydrogenolyzed for each amidation. The sequence is that of Cobyric acid synthase from Bradyrhizobium diazoefficiens (strain JCM 10833 / BCRC 13528 / IAM 13628 / NBRC 14792 / USDA 110).